Here is a 331-residue protein sequence, read N- to C-terminus: Putative peptidyl-prolyl cis-trans isomerase RC0542 (331 aa).

A disordered region spans residues 33–54 (EQTASNNSSTDENQTSINNEPP). The PPIase FKBP-type domain maps to 128-226 (GHVVTVFYQI…SNEVKIYDDE (99 aa)).

The enzyme catalyses [protein]-peptidylproline (omega=180) = [protein]-peptidylproline (omega=0). In Rickettsia conorii (strain ATCC VR-613 / Malish 7), this protein is Putative peptidyl-prolyl cis-trans isomerase RC0542.